The primary structure comprises 394 residues: Phosphopentomutase (394 aa).

Mn(2+)-binding residues include Asp-15, Asp-288, His-293, Asp-329, His-330, and His-341.

Belongs to the phosphopentomutase family. Requires Mn(2+) as cofactor.

It localises to the cytoplasm. It carries out the reaction 2-deoxy-alpha-D-ribose 1-phosphate = 2-deoxy-D-ribose 5-phosphate. The enzyme catalyses alpha-D-ribose 1-phosphate = D-ribose 5-phosphate. Its pathway is carbohydrate degradation; 2-deoxy-D-ribose 1-phosphate degradation; D-glyceraldehyde 3-phosphate and acetaldehyde from 2-deoxy-alpha-D-ribose 1-phosphate: step 1/2. Its function is as follows. Isomerase that catalyzes the conversion of deoxy-ribose 1-phosphate (dRib-1-P) and ribose 1-phosphate (Rib-1-P) to deoxy-ribose 5-phosphate (dRib-5-P) and ribose 5-phosphate (Rib-5-P), respectively. The polypeptide is Phosphopentomutase (Bacillus licheniformis (strain ATCC 14580 / DSM 13 / JCM 2505 / CCUG 7422 / NBRC 12200 / NCIMB 9375 / NCTC 10341 / NRRL NRS-1264 / Gibson 46)).